The following is a 192-amino-acid chain: dCTP deaminase, dUMP-forming (192 aa).

Residues 101-106 (KSSLGR), aspartate 119, 127-129 (TLE), glutamine 148, tyrosine 162, and glutamine 174 contribute to the dCTP site. The Proton donor/acceptor role is filled by glutamate 129. The disordered stretch occupies residues 171–192 (YQGQRGPTPSRSWQSWHTWPTR).

This sequence belongs to the dCTP deaminase family. Homotrimer.

The catalysed reaction is dCTP + 2 H2O = dUMP + NH4(+) + diphosphate. The protein operates within pyrimidine metabolism; dUMP biosynthesis; dUMP from dCTP: step 1/1. In terms of biological role, bifunctional enzyme that catalyzes both the deamination of dCTP to dUTP and the hydrolysis of dUTP to dUMP without releasing the toxic dUTP intermediate. In Salinispora arenicola (strain CNS-205), this protein is dCTP deaminase, dUMP-forming.